Consider the following 198-residue polypeptide: Myb-related protein 340 (198 aa).

HTH myb-type domains are found at residues 10–62 and 63–117; these read DVEV…LNYL and RPDV…IQKH. 2 DNA-binding regions (H-T-H motif) span residues 38–62 and 90–113; these read WNTI…LNYL and WSKI…NRTR.

Expressed only in flowers.

The protein resides in the nucleus. In terms of biological role, transcription factor. The protein is Myb-related protein 340 of Antirrhinum majus (Garden snapdragon).